Consider the following 312-residue polypeptide: Olfactory receptor 8H3 (312 aa).

Residues 1-26 (MMGRRNDTNVADFILTGLSDSEEVQM) lie on the Extracellular side of the membrane. Asparagine 6 is a glycosylation site (N-linked (GlcNAc...) asparagine). A helical transmembrane segment spans residues 27 to 47 (ALFMLFLLIYLITMLGNVGML). At 48-55 (LIIRLDLQ) the chain is on the cytoplasmic side. Residues 56–76 (LHTPMYFFLTHLSFIDLSYST) traverse the membrane as a helical segment. The Extracellular segment spans residues 77-99 (VVTPKTLANLLTSNYISFTGCFA). A disulfide bond links cysteine 97 and cysteine 189. The chain crosses the membrane as a helical span at residues 100–120 (QMFCFVFLGTAECYLLSSMAY). At 121 to 139 (DRYAAICSPLHYTVIMPKR) the chain is on the cytoplasmic side. A helical membrane pass occupies residues 140–160 (LCLALITGPYVIGFMDSFVNV). Over 161–197 (VSMSRLHFCDSNIIHHFFCDTSPILALSCTDTDNTEM) the chain is Extracellular. A helical membrane pass occupies residues 198–217 (LIFIIAGSTLMVSLITISAS). Over 218–237 (YVSILSTILKINSTSGKQKA) the chain is Cytoplasmic. Residues 238–258 (FSTCVSHLLGVTIFYGTMIFT) form a helical membrane-spanning segment. At 259-271 (YLKPRKSYSLGRD) the chain is on the extracellular side. A helical transmembrane segment spans residues 272–292 (QVAPVFYTIVIPMLNPLIYSL). The Cytoplasmic portion of the chain corresponds to 293-312 (RNREVKNALIRVMQRRQDSR).

This sequence belongs to the G-protein coupled receptor 1 family.

It is found in the cell membrane. Odorant receptor. In Homo sapiens (Human), this protein is Olfactory receptor 8H3 (OR8H3).